Consider the following 212-residue polypeptide: ATP synthase subunit 5, mitochondrial (212 aa).

A mitochondrion-targeting transit peptide spans 1–17 (MFNRVFTRSFASSLRAA).

It belongs to the ATPase delta chain family. F-type ATPases have 2 components, CF(1) - the catalytic core - and CF(0) - the membrane proton channel. CF(1) has five subunits: alpha(3), beta(3), gamma(1), delta(1), epsilon(1). CF(0) has three main subunits: a, b and c.

It localises to the mitochondrion. It is found in the mitochondrion inner membrane. In terms of biological role, mitochondrial membrane ATP synthase (F(1)F(0) ATP synthase or Complex V) produces ATP from ADP in the presence of a proton gradient across the membrane which is generated by electron transport complexes of the respiratory chain. F-type ATPases consist of two structural domains, F(1) - containing the extramembraneous catalytic core and F(0) - containing the membrane proton channel, linked together by a central stalk and a peripheral stalk. During catalysis, ATP synthesis in the catalytic domain of F(1) is coupled via a rotary mechanism of the central stalk subunits to proton translocation. Part of the complex F(0) domain and the peripheric stalk, which acts as a stator to hold the catalytic alpha(3)beta(3) subcomplex and subunit a/ATP6 static relative to the rotary elements. This chain is ATP synthase subunit 5, mitochondrial (ATP5), found in Saccharomyces cerevisiae (strain ATCC 204508 / S288c) (Baker's yeast).